The following is a 759-amino-acid chain: ARF GTPase-activating protein GIT2 (759 aa).

Residues 1–124 (MSKRLRSSEV…AFVHRLPCRD (124 aa)) enclose the Arf-GAP domain. The C4-type zinc-finger motif lies at 11–34 (CADCSGPDPSWASVNRGTFLCDEC). 3 ANK repeats span residues 132 to 161 (DLSKQLHSSVRTGNLETCLRLLSLGAQANF), 166 to 195 (KGNTPLHVASKAGQILQAELLAVYGADPGT), and 199 to 228 (SGKTPVDYARQGGHHELAERLVEIQYELTD). Residues 379 to 422 (QHSVESQDNDQPDYDSVASDEDTDLETTASKTNRQKSLDSDLSD) form a disordered region. A compositionally biased stretch (acidic residues) spans 385–403 (QDNDQPDYDSVASDEDTDL). Phosphoserine occurs at positions 394 and 397. T401 carries the phosphothreonine modification. Phosphoserine occurs at positions 415, 418, and 421. A coiled-coil region spans residues 437-478 (LVASEAKIQQLMKVNNNLSDELRIMQKKLQTLQSENSNLRKQ). The segment covering 480–499 (TTNVYQVQTGSEYTDTSNHS) has biased composition (polar residues). Disordered regions lie at residues 480-538 (TTNV…EESR) and 554-643 (VTSS…TEDV). Position 484 is a phosphotyrosine (Y484). A compositionally biased stretch (low complexity) spans 555-569 (TSSSSLPSFPSTLSW). A phosphoserine mark is found at S559, S562, and S570. Over residues 570-583 (SRDESARRASRLEK) the composition is skewed to basic and acidic residues. Polar residues predominate over residues 584-597 (QNSTPESDYDNTPN). T587 carries the post-translational modification Phosphothreonine. S614 is subject to Phosphoserine.

As to quaternary structure, may form heterooligomers with GIT1. Directly interacts with protein Piccolo/PCLO. Interacts with PPFIA1 and PPFIA2. Interacts with ARHGEF7. Identified in a complex with ARHGEF6 and BIN2. Interacts with PAK3. Interacts with PXN/paxillin. Interacts with TGFB1I1. Forms a complex with EFNB1 and GRB4/NCK2.

Its function is as follows. GTPase-activating protein for ADP ribosylation factor family members, including ARF1. The protein is ARF GTPase-activating protein GIT2 (GIT2) of Homo sapiens (Human).